The primary structure comprises 585 residues: Nucleus accumbens-associated protein 2 (585 aa).

Positions 30-94 constitute a BTB domain; it reads CDVSIVVKGQ…CYTGKLTMAA (65 aa). Residues K171 and K215 each participate in a glycyl lysine isopeptide (Lys-Gly) (interchain with G-Cter in SUMO2) cross-link. Residues 238–261 show a composition bias toward polar residues; that stretch reads PYPQGERTSPGASSLPTTDSSTSY. Residues 238–269 form a disordered region; it reads PYPQGERTSPGASSLPTTDSSTSYHNEDEDDD. Residues K296, K426, and K453 each participate in a glycyl lysine isopeptide (Lys-Gly) (interchain with G-Cter in SUMO2) cross-link. The 98-residue stretch at 348 to 445 folds into the BEN domain; the sequence is GSGVYITRGQ…DMCTNARRVR (98 aa). Positions 541–585 are disordered; sequence APEQLPADGQSSPQAFEQGNTSSSRPQTPVATATRRPEGTYAGTL. Residues 549-571 are compositionally biased toward polar residues; the sequence is GQSSPQAFEQGNTSSSRPQTPVA.

In terms of assembly, homooligomer; mediated by the BTB domain. Interacts with the NuRD complex. Interacts (via C-terminal part) with HDAC2. Interacts (via BTB domain) with MTA1, MTA2 and MTA3.

The protein resides in the nucleus. Functions as a transcriptional repressor through its association with the NuRD complex. Recruits the NuRD complex to the promoter of MDM2, leading to the repression of MDM2 transcription and subsequent stability of p53/TP53. This chain is Nucleus accumbens-associated protein 2 (Nacc2), found in Rattus norvegicus (Rat).